Reading from the N-terminus, the 289-residue chain is Acetyl-coenzyme A carboxylase carboxyl transferase subunit beta (289 aa).

Residues 28 to 289 form the CoA carboxyltransferase N-terminal domain; it reads VMTKCPECKK…QGGGMAVWQS (262 aa). Zn(2+) contacts are provided by C32, C35, C51, and C54. The segment at 32-54 adopts a C4-type zinc-finger fold; the sequence is CPECKKIMYTKELLKNLKVCVNC.

The protein belongs to the AccD/PCCB family. In terms of assembly, acetyl-CoA carboxylase is a heterohexamer composed of biotin carboxyl carrier protein (AccB), biotin carboxylase (AccC) and two subunits each of ACCase subunit alpha (AccA) and ACCase subunit beta (AccD). Zn(2+) serves as cofactor.

It localises to the cytoplasm. It catalyses the reaction N(6)-carboxybiotinyl-L-lysyl-[protein] + acetyl-CoA = N(6)-biotinyl-L-lysyl-[protein] + malonyl-CoA. The protein operates within lipid metabolism; malonyl-CoA biosynthesis; malonyl-CoA from acetyl-CoA: step 1/1. In terms of biological role, component of the acetyl coenzyme A carboxylase (ACC) complex. Biotin carboxylase (BC) catalyzes the carboxylation of biotin on its carrier protein (BCCP) and then the CO(2) group is transferred by the transcarboxylase to acetyl-CoA to form malonyl-CoA. The sequence is that of Acetyl-coenzyme A carboxylase carboxyl transferase subunit beta from Bacillus cereus (strain G9842).